Consider the following 723-residue polypeptide: Fatty acid oxidation complex subunit alpha (723 aa).

The interval 1–189 (MIYQAETLQV…KIGLLDAVVD (189 aa)) is enoyl-CoA hydratase/isomerase. Asp-296 is a binding site for substrate. The 3-hydroxyacyl-CoA dehydrogenase stretch occupies residues 311 to 723 (SKDTQRAAVL…FYGAQQQGSI (413 aa)). NAD(+) is bound by residues Met-325, Asp-344, 401 to 403 (VVE), Lys-408, and Ser-430. His-451 serves as the catalytic For 3-hydroxyacyl-CoA dehydrogenase activity. An NAD(+)-binding site is contributed by Asn-454. Substrate is bound by residues Asn-501 and Tyr-661.

The protein in the N-terminal section; belongs to the enoyl-CoA hydratase/isomerase family. It in the C-terminal section; belongs to the 3-hydroxyacyl-CoA dehydrogenase family. In terms of assembly, heterotetramer of two alpha chains (FadB) and two beta chains (FadA).

The enzyme catalyses a (3S)-3-hydroxyacyl-CoA + NAD(+) = a 3-oxoacyl-CoA + NADH + H(+). The catalysed reaction is a (3S)-3-hydroxyacyl-CoA = a (2E)-enoyl-CoA + H2O. It carries out the reaction a 4-saturated-(3S)-3-hydroxyacyl-CoA = a (3E)-enoyl-CoA + H2O. It catalyses the reaction (3S)-3-hydroxybutanoyl-CoA = (3R)-3-hydroxybutanoyl-CoA. The enzyme catalyses a (3Z)-enoyl-CoA = a 4-saturated (2E)-enoyl-CoA. The catalysed reaction is a (3E)-enoyl-CoA = a 4-saturated (2E)-enoyl-CoA. It functions in the pathway lipid metabolism; fatty acid beta-oxidation. Involved in the aerobic and anaerobic degradation of long-chain fatty acids via beta-oxidation cycle. Catalyzes the formation of 3-oxoacyl-CoA from enoyl-CoA via L-3-hydroxyacyl-CoA. It can also use D-3-hydroxyacyl-CoA and cis-3-enoyl-CoA as substrate. The polypeptide is Fatty acid oxidation complex subunit alpha (Vibrio campbellii (strain ATCC BAA-1116)).